Consider the following 680-residue polypeptide: MKSQNKYSIRKFSVGASSILIATLLFLSGGQAQAAEKQVNMGNSQEDTVTAQSIGDQQTRENANYQRENGVDEQQHTENLTKNLHNDKTISEENHRKTDDLNKDQLKDDKKSSLNNKNIQRDTTKNNNANPRDVNQGLEQAINDGKQSKVASQQQSKEADNSQDLNANNNLPSQSRTKVSPSLNKSDQTSQREIVNETEIEKVQPQQKNQANDKITDHNFNNEQEVKPQKDEKTLSVSDLKNNQKSPVEPTKDNDKKNGLNLLKSSAVATLPNKGTKELTAKAKGDQTNKVAKQGQYKNQDPIVLVHGFNGFTDDINPSVLAHYWGGNKMNIRQDLEENGYKAYEASISAFGSNYDRAVELYYYIKGGRVDYGAAHAAKYGHERYGKTYEGIYKDWKPGQKVHLVGHSMGGQTIRQLEELLRNGSREEIEYQKKHSGEISPLFKGNNDNMISSITTLGTPHNGTHASDLAGNEALVRQIVFDIGKMFGNKNSRVDFGLAQWGLKQKPNESYIDYVKRVKQSNLWKSKDNGFYDLTREGATDLNRKTSLNPNIVYKTYTGEATHKALNSDRQKADLNMFFPFVITGNLIGKATEKEWRENDGLVSVISSQHPFNQAYTNATDKIQKGIWQVTPTKHDWDHVDFVGQDSSDTVRTREELQDFWHHLADDLVKTEKVTDTKQA.

An N-terminal signal peptide occupies residues 1–34 (MKSQNKYSIRKFSVGASSILIATLLFLSGGQAQA). The propeptide occupies 35-290 (AEKQVNMGNS…AKAKGDQTNK (256 aa)). Disordered stretches follow at residues 39 to 58 (VNMG…GDQQ) and 82 to 260 (KNLH…KNGL). The span at 40–58 (NMGNSQEDTVTAQSIGDQQ) shows a compositional bias: polar residues. The segment covering 84–112 (LHNDKTISEENHRKTDDLNKDQLKDDKKS) has biased composition (basic and acidic residues). 2 stretches are compositionally biased toward polar residues: residues 162 to 193 (SQDL…SQRE) and 204 to 223 (QPQQ…FNNE). The span at 224–234 (QEVKPQKDEKT) shows a compositional bias: basic and acidic residues. Polar residues predominate over residues 235–246 (LSVSDLKNNQKS). Ser408 acts as the Nucleophile in catalysis. The active-site Charge relay system is Asp600. Asp638 contributes to the Ca(2+) binding site. Catalysis depends on His639, which acts as the Charge relay system. 3 residues coordinate Ca(2+): Asp641, Asp646, and Asp649.

Belongs to the AB hydrolase superfamily. Lipase family.

It localises to the secreted. It catalyses the reaction a triacylglycerol + H2O = a diacylglycerol + a fatty acid + H(+). This is Lipase 1 (lip1) from Staphylococcus aureus (strain MRSA252).